We begin with the raw amino-acid sequence, 124 residues long: UPF0235 protein (124 aa).

The interval methionine 1–asparagine 22 is disordered.

Belongs to the UPF0235 family.

The protein is UPF0235 protein of Dictyostelium discoideum (Social amoeba).